The following is a 217-amino-acid chain: Protein-L-isoaspartate O-methyltransferase 2 (217 aa).

Residue Ser64 is part of the active site.

It belongs to the methyltransferase superfamily. L-isoaspartyl/D-aspartyl protein methyltransferase family.

It is found in the cytoplasm. The catalysed reaction is [protein]-L-isoaspartate + S-adenosyl-L-methionine = [protein]-L-isoaspartate alpha-methyl ester + S-adenosyl-L-homocysteine. Catalyzes the methyl esterification of L-isoaspartyl residues in peptides and proteins that result from spontaneous decomposition of normal L-aspartyl and L-asparaginyl residues. It plays a role in the repair and/or degradation of damaged proteins. The protein is Protein-L-isoaspartate O-methyltransferase 2 of Rhodopseudomonas palustris (strain HaA2).